We begin with the raw amino-acid sequence, 1099 residues long: Solute carrier family 12 member 1 (1099 aa).

Residues 1-177 (MSLNNSSNVF…EDDQAGVVKF (177 aa)) lie on the Cytoplasmic side of the membrane. An RFXV motif motif is present at residues 20 to 23 (RFQV). The disordered stretch occupies residues 31–53 (ESSAAADDNTDPPHYEETSFGDE). The residue at position 61 (serine 61) is a Phosphoserine. Residue serine 91 is modified to Phosphoserine; by OXSR1 and STK39. Residue threonine 95 is modified to Phosphothreonine. 2 positions are modified to phosphothreonine; by OXSR1 and STK39: threonine 100 and threonine 105. Threonine 118 is subject to Phosphothreonine. Serine 120 is subject to Phosphoserine. The residue at position 130 (serine 130) is a Phosphoserine; by AMPK. Phosphoserine is present on serine 148. Residues 178 to 198 (GWVKGVLVRCMLNIWGVMLFI) traverse the membrane as a helical segment. The Extracellular segment spans residues 199 to 201 (RLS). The chain crosses the membrane as a helical span at residues 202–222 (WIVGEAGIGLGVLIILLSTMV). At 223-259 (TSITGLSTSAIATNGFVRGGGAYYLISRSLGPEFGGS) the chain is on the cytoplasmic side. The helical transmembrane segment at 260-280 (IGLIFAFANAVAVAMYVVGFA) threads the bilayer. Topologically, residues 281–302 (ETVVDLLKESDSMMVDPTNDIR) are extracellular. A helical membrane pass occupies residues 303-323 (IIGSITVVILLGISVAGMEWE). Topologically, residues 324–327 (AKAQ) are cytoplasmic. Residues 328–348 (VILLVILLIAIANFFIGTVIP) form a helical membrane-spanning segment. The Extracellular segment spans residues 349-379 (SNNEKKSRGFFNYQASIFAENFGPRFTKGEG). The helical transmembrane segment at 380–400 (FFSVFAIFFPAATGILAGANI) threads the bilayer. The Cytoplasmic segment spans residues 401–417 (SGDLEDPQDAIPRGTML). Residues 418–438 (AIFITTVAYLGVAICVGACVV) traverse the membrane as a helical segment. The Extracellular segment spans residues 439–550 (RDATGNMNDT…NNEPLRGYIL (112 aa)). 2 N-linked (GlcNAc...) asparagine glycosylation sites follow: asparagine 446 and asparagine 456. Helical transmembrane passes span 551–571 (TFLI…APII) and 572–592 (SNFF…ASYA). Over 593–609 (KSPGWRPAYGIYNMWVS) the chain is Extracellular. The chain crosses the membrane as a helical span at residues 610 to 630 (LFGAVLCCAVMFVINWWAAVI). Over 631-1099 (TYVIEFFLYV…NHKNVLTFYS (469 aa)) the chain is Cytoplasmic.

Belongs to the SLC12A transporter family. When phosphorylated, interacts with PPP3CB. Phosphorylated at Ser-91, Thr-100 and Thr-105 by OXSR1/OSR1 and STK39/SPAK downstream of WNK kinases (WNK1, WNK2, WNK3 or WNK4), promoting its activity. As to expression, kidney; localizes to the thick ascending limbs (at protein level).

The protein resides in the apical cell membrane. The enzyme catalyses K(+)(out) + 2 chloride(out) + Na(+)(out) = K(+)(in) + 2 chloride(in) + Na(+)(in). Activated following phosphorylation by OXSR1/OSR1 and STK39/SPAK downstream of WNK kinases (WNK1, WNK2, WNK3 or WNK4). In terms of biological role, renal sodium, potassium and chloride ion cotransporter that mediates the transepithelial NaCl reabsorption in the thick ascending limb and plays an essential role in the urinary concentration and volume regulation. Electrically silent transporter system. The sequence is that of Solute carrier family 12 member 1 (SLC12A1) from Homo sapiens (Human).